We begin with the raw amino-acid sequence, 66 residues long: Phylloseptin-H7 (66 aa).

The signal sequence occupies residues 1 to 22; that stretch reads MAFLKKSLFLVLFLGLVSLSIC. The propeptide occupies 23 to 44; that stretch reads EEEKRETEEEENDQEEDDKSEE. The tract at residues 25–44 is disordered; that stretch reads EKRETEEEENDQEEDDKSEE. Positions 30 to 41 are enriched in acidic residues; that stretch reads EEEENDQEEDDK. L65 carries the leucine amide modification.

As to expression, expressed by the skin glands.

Its subcellular location is the secreted. In terms of biological role, has antimicrobial activity. The chain is Phylloseptin-H7 from Pithecopus hypochondrialis (Orange-legged leaf frog).